Here is a 418-residue protein sequence, read N- to C-terminus: Glycine betaine transport ATP-binding protein OpuAA (418 aa).

The ABC transporter domain maps to Lys-34 to Val-270. Gly-66–Ser-73 serves as a coordination point for ATP. CBS domains lie at Ile-284–Leu-340 and Leu-344–Glu-403.

Belongs to the ABC transporter superfamily. The complex is composed of two ATP-binding proteins (OpuAA), two transmembrane proteins (OpuAB) and a solute-binding protein (OpuAC).

The catalysed reaction is a quaternary ammonium(out) + ATP + H2O = a quaternary ammonium(in) + ADP + phosphate + H(+). Its function is as follows. Involved in a multicomponent binding-protein-dependent transport system for glycine betaine. Probably responsible for energy coupling to the transport system. This is Glycine betaine transport ATP-binding protein OpuAA (opuAA) from Bacillus subtilis (strain 168).